Consider the following 490-residue polypeptide: Betaine aldehyde dehydrogenase (490 aa).

D93 lines the K(+) pocket. 150-152 (GAW) serves as a coordination point for NAD(+). The Charge relay system role is filled by K162. 176–179 (KPSE) serves as a coordination point for NAD(+). V180 contributes to the K(+) binding site. Residue 230–233 (GIAS) participates in NAD(+) binding. L246 contributes to the K(+) binding site. E252 functions as the Proton acceptor in the catalytic mechanism. The NAD(+) site is built by G254, C286, and E387. C286 acts as the Nucleophile in catalysis. The residue at position 286 (C286) is a Cysteine sulfenic acid (-SOH). K457 and G460 together coordinate K(+). The Charge relay system role is filled by E464.

Belongs to the aldehyde dehydrogenase family. As to quaternary structure, dimer of dimers. K(+) is required as a cofactor.

The catalysed reaction is betaine aldehyde + NAD(+) + H2O = glycine betaine + NADH + 2 H(+). It functions in the pathway amine and polyamine biosynthesis; betaine biosynthesis via choline pathway; betaine from betaine aldehyde: step 1/1. In terms of biological role, involved in the biosynthesis of the osmoprotectant glycine betaine. Catalyzes the irreversible oxidation of betaine aldehyde to the corresponding acid. This is Betaine aldehyde dehydrogenase from Pectobacterium atrosepticum (strain SCRI 1043 / ATCC BAA-672) (Erwinia carotovora subsp. atroseptica).